Here is a 532-residue protein sequence, read N- to C-terminus: uncharacterized protein (532 aa).

The next 5 helical transmembrane spans lie at 11-31 (YLSHGLVIHMIINGIVLALII), 51-71 (IEPFVLLVLMELISGIQKIFF), 126-146 (LIDILTYQSSHLFAFIGYTLW), 147-167 (ILYNSPITLTIYILLIPIIVF), and 231-253 (YVESINLAITLLTRFNLLIVLLI). The region spanning 315–531 (ICINKLVYEY…MIIPMNNGII (217 aa)) is the ABC transporter domain. 349-356 (GKSGSGKS) contributes to the ATP binding site.

It is found in the membrane. This is an uncharacterized protein from Acanthamoeba polyphaga mimivirus (APMV).